A 319-amino-acid polypeptide reads, in one-letter code: Methyltransferase tpcM (319 aa).

Positions 63–155 are methyltransferase domain; sequence DVGAGIGPYA…QLRPGGTFAC (93 aa).

It belongs to the methyltransferase superfamily. Specifically expressed in conidia.

It functions in the pathway secondary metabolite biosynthesis. Methyltransferase; part of the gene cluster that mediates the biosynthesis of trypacidin, a mycotoxin with antiprotozoal activity and that plays a role in the infection process. The pathway begins with the synthesis of atrochrysone thioester by the polyketide synthase (PKS) tpcC. The atrochrysone carboxyl ACP thioesterase tpcB then breaks the thioester bond and releases the atrochrysone carboxylic acid from tpcC. The decarboxylase tpcK converts atrochrysone carboxylic acid to atrochrysone which is further reduced into emodin anthrone. The next step is performed by the emodin anthrone oxygenase tpcL that catalyzes the oxidation of emodinanthrone to emodin. Emodin O-methyltransferase encoded by tpcA catalyzes methylation of the 8-hydroxy group of emodin to form questin. Ring cleavage of questin by questin oxidase tpcI leads to desmethylsulochrin via several intermediates including questin epoxide. Another methylation step catalyzed by tpcM leads to the formation of sulochrin which is further converted to monomethylsulfochrin by tpcH. Finally, the tpcJ catalyzes the conversion of monomethylsulfochrin to trypacidin. Trypacidin is toxic for human pulmonary and bronchial epithelial cells by initiating the intracellular formation of nitric oxide (NO) and hydrogen peroxide (H(2)O(2)), thus triggering host necrotic cell death. The trypacidin pathway is also able to produce endocrocin via a distinct route from the endocrocin Enc pathway. This Aspergillus fumigatus (strain ATCC MYA-4609 / CBS 101355 / FGSC A1100 / Af293) (Neosartorya fumigata) protein is Methyltransferase tpcM.